The sequence spans 901 residues: Protein translocase subunit SecA (901 aa).

ATP is bound by residues glutamine 87, 105-109 (GEGKT), and aspartate 512. The disordered stretch occupies residues 858–891 (SHQDDDTAAAAALAAQTGDRKVGRNDPCPCGSGK). 4 residues coordinate Zn(2+): cysteine 885, cysteine 887, cysteine 896, and histidine 897.

Belongs to the SecA family. Monomer and homodimer. Part of the essential Sec protein translocation apparatus which comprises SecA, SecYEG and auxiliary proteins SecDF-YajC and YidC. Requires Zn(2+) as cofactor.

It localises to the cell inner membrane. It is found in the cytoplasm. It carries out the reaction ATP + H2O + cellular proteinSide 1 = ADP + phosphate + cellular proteinSide 2.. Functionally, part of the Sec protein translocase complex. Interacts with the SecYEG preprotein conducting channel. Has a central role in coupling the hydrolysis of ATP to the transfer of proteins into and across the cell membrane, serving both as a receptor for the preprotein-SecB complex and as an ATP-driven molecular motor driving the stepwise translocation of polypeptide chains across the membrane. The chain is Protein translocase subunit SecA from Escherichia fergusonii (strain ATCC 35469 / DSM 13698 / CCUG 18766 / IAM 14443 / JCM 21226 / LMG 7866 / NBRC 102419 / NCTC 12128 / CDC 0568-73).